The primary structure comprises 152 residues: Deoxyuridine 5'-triphosphate nucleotidohydrolase (152 aa).

Substrate contacts are provided by residues 71-73, asparagine 84, 88-90, and methionine 98; these read RSG and LID.

This sequence belongs to the dUTPase family. Requires Mg(2+) as cofactor.

It carries out the reaction dUTP + H2O = dUMP + diphosphate + H(+). It participates in pyrimidine metabolism; dUMP biosynthesis; dUMP from dCTP (dUTP route): step 2/2. Its function is as follows. This enzyme is involved in nucleotide metabolism: it produces dUMP, the immediate precursor of thymidine nucleotides and it decreases the intracellular concentration of dUTP so that uracil cannot be incorporated into DNA. This Aeromonas salmonicida (strain A449) protein is Deoxyuridine 5'-triphosphate nucleotidohydrolase.